A 27-amino-acid polypeptide reads, in one-letter code: Cupiennin-4b (27 aa).

At Gln27 the chain carries Glutamine amide.

Expressed by the venom gland.

The protein localises to the secreted. This is Cupiennin-4b from Cupiennius salei (American wandering spider).